We begin with the raw amino-acid sequence, 2531 residues long: Probable polyketide synthase 26 (2531 aa).

The region spanning 10 to 433 (QEDIAIIGFR…GSNCCLVLTE (424 aa)) is the Ketosynthase family 3 (KS3) domain. Residues Cys174, His316, and His356 each act as for beta-ketoacyl synthase activity in the active site. The interval 620–653 (GINPSFIVGHSLGELPMAFCSGMIDFDTVCYLLY) is acyl/malonyl transferase. The For acyl/malonyl transferase activity role is filled by Ser630. Positions 915–1036 (MDTLGFSNEK…ANYHLSHRDD (122 aa)) are N-terminal hotdog fold. The region spanning 915-1206 (MDTLGFSNEK…LKSLIPLKDP (292 aa)) is the PKS/mFAS DH domain. The active-site Proton acceptor; for dehydratase activity is the His948. The interval 1055 to 1206 (NLTKLSKNQF…LKSLIPLKDP (152 aa)) is C-terminal hotdog fold. Residue Asp1117 is the Proton donor; for dehydratase activity of the active site. Residues 2431-2509 (ASENPVKDLL…DNIKILTDSY (79 aa)) form the Carrier domain. Ser2468 is modified (O-(pantetheine 4'-phosphoryl)serine).

Pantetheine 4'-phosphate serves as cofactor.

Its function is as follows. Probable polyketide synthase. This chain is Probable polyketide synthase 26 (pks26), found in Dictyostelium discoideum (Social amoeba).